The primary structure comprises 268 residues: Mediator of RNA polymerase II transcription subunit 18 (268 aa).

Residues 91–112 are disordered; it reads APASPVADQDAHMSGTDEKSSV. Residues 99–112 are compositionally biased toward basic and acidic residues; that stretch reads QDAHMSGTDEKSSV.

It belongs to the Mediator complex subunit 18 family. In terms of assembly, component of the Mediator complex.

It is found in the nucleus. Functionally, component of the Mediator complex, a coactivator involved in the regulated transcription of nearly all RNA polymerase II-dependent genes. Mediator functions as a bridge to convey information from gene-specific regulatory proteins to the basal RNA polymerase II transcription machinery. Mediator is recruited to promoters by direct interactions with regulatory proteins and serves as a scaffold for the assembly of a functional preinitiation complex with RNA polymerase II and the general transcription factors. The chain is Mediator of RNA polymerase II transcription subunit 18 (srb5) from Aspergillus fumigatus (strain ATCC MYA-4609 / CBS 101355 / FGSC A1100 / Af293) (Neosartorya fumigata).